We begin with the raw amino-acid sequence, 201 residues long: Thioredoxin reductase-like selenoprotein T (201 aa).

The N-terminal stretch at 1–26 (MARSSGPLCLLLLGGLVAGILSGASA) is a signal peptide. Residues 51 to 54 (CVSU) constitute a cross-link (cysteinyl-selenocysteine (Cys-Sec)). Residue Sec-54 is a non-standard amino acid, selenocysteine. Residues 96–116 (VFKLVLIGLIIAGKDPFAFFG) traverse the membrane as a helical segment.

The protein belongs to the SelWTH family. Selenoprotein T subfamily. In terms of processing, may contain a selenide-sulfide bond between Cys-51 and Sec-54. This bond is speculated to serve as redox-active pair.

It is found in the endoplasmic reticulum membrane. The catalysed reaction is [thioredoxin]-dithiol + NADP(+) = [thioredoxin]-disulfide + NADPH + H(+). In terms of biological role, selenoprotein with thioredoxin reductase-like oxidoreductase activity. The chain is Thioredoxin reductase-like selenoprotein T (selenot) from Xenopus tropicalis (Western clawed frog).